The chain runs to 269 residues: uncharacterized protein (269 aa).

A compositionally biased stretch (pro residues) spans 1 to 16; the sequence is MTDVPSKPPQTTPPPK. Disordered regions lie at residues 1 to 110 and 157 to 269; these read MTDV…TISG and ILQQ…PTIQ. A compositionally biased stretch (polar residues) spans 21–45; that stretch reads APTTIFSSPPQLPDRSSLNISHTAS. A compositionally biased stretch (low complexity) spans 46–58; that stretch reads TPTLTPTPLQQQQ. The span at 80–93 shows a compositional bias: polar residues; that stretch reads SFSNSPNRQTQSFI. Low complexity predominate over residues 159-181; the sequence is QQPQQSHSPQQQQQQHTPNHQQP. The span at 182-195 shows a compositional bias: polar residues; that stretch reads LSPQQQKDLAQKRS. Positions 198–213 are enriched in pro residues; it reads PLPPRPNKNRPLPTPI.

This is an uncharacterized protein from Dictyostelium discoideum (Social amoeba).